We begin with the raw amino-acid sequence, 828 residues long: DNA gyrase subunit A (828 aa).

Residues 32-497 form the Topo IIA-type catalytic domain; sequence LPDVRDGLKP…EVLSLEDEDL (466 aa). Tyr120 (O-(5'-phospho-DNA)-tyrosine intermediate) is an active-site residue. The GyrA-box motif lies at 524–530; it reads QKRGGRG.

This sequence belongs to the type II topoisomerase GyrA/ParC subunit family. As to quaternary structure, heterotetramer, composed of two GyrA and two GyrB chains. In the heterotetramer, GyrA contains the active site tyrosine that forms a transient covalent intermediate with DNA, while GyrB binds cofactors and catalyzes ATP hydrolysis.

It localises to the cytoplasm. The enzyme catalyses ATP-dependent breakage, passage and rejoining of double-stranded DNA.. In terms of biological role, a type II topoisomerase that negatively supercoils closed circular double-stranded (ds) DNA in an ATP-dependent manner to modulate DNA topology and maintain chromosomes in an underwound state. Negative supercoiling favors strand separation, and DNA replication, transcription, recombination and repair, all of which involve strand separation. Also able to catalyze the interconversion of other topological isomers of dsDNA rings, including catenanes and knotted rings. Type II topoisomerases break and join 2 DNA strands simultaneously in an ATP-dependent manner. The sequence is that of DNA gyrase subunit A from Streptococcus pyogenes serotype M1.